The chain runs to 1199 residues: Transcription initiation factor TFIID subunit 2 (1199 aa).

Disordered stretches follow at residues 1 to 23 (MPLTGVEPARMNRKKGDKGFESP), 1067 to 1102 (RPSTPGLSKYRPASSRSALIPQHSAGCDSTPTTKPQ), and 1136 to 1199 (KEST…SLSD). Residues 1093 to 1102 (CDSTPTTKPQ) are compositionally biased toward polar residues. The segment covering 1144–1171 (SDHHHHHHHEHKKKKKKHKHKHKHKHKH) has biased composition (basic residues). Residues 1182–1199 (TFSSPASGRSIRSPSLSD) show a composition bias toward polar residues. Phosphoserine occurs at positions 1185, 1188, 1194, 1196, and 1198.

Belongs to the TAF2 family. In terms of assembly, component of the TFIID basal transcription factor complex, composed of TATA-box-binding protein TBP, and a number of TBP-associated factors (TAFs), including TAF1, TAF2, TAF3, TAF4, TAF5, TAF6, TAF7, TAF8, TAF9, TAF10, TAF11, TAF12 and TAF13. Interacts with TAF2C1. Component of the TFTC-HAT complex. Expressed in all tissues tested.

Its subcellular location is the nucleus. In terms of biological role, the TFIID basal transcription factor complex plays a major role in the initiation of RNA polymerase II (Pol II)-dependent transcription. TFIID recognizes and binds promoters with or without a TATA box via its subunit TBP, a TATA-box-binding protein, and promotes assembly of the pre-initiation complex (PIC). The TFIID complex consists of TBP and TBP-associated factors (TAFs), including TAF1, TAF2, TAF3, TAF4, TAF5, TAF6, TAF7, TAF8, TAF9, TAF10, TAF11, TAF12 and TAF13. TAF2 forms a promoter DNA binding subcomplex of TFIID, together with TAF7 and TAF1. The protein is Transcription initiation factor TFIID subunit 2 (TAF2) of Homo sapiens (Human).